A 66-amino-acid polypeptide reads, in one-letter code: Toxin Boma6b (66 aa).

In terms of domain architecture, LCN-type CS-alpha/beta spans 2-64 (RDAYIAQNYN…VPIKVEGKCH (63 aa)). 4 disulfides stabilise this stretch: Cys12-Cys63, Cys16-Cys36, Cys22-Cys46, and Cys26-Cys48.

It belongs to the long (4 C-C) scorpion toxin superfamily. Sodium channel inhibitor family. Alpha subfamily. As to expression, expressed by the venom gland.

It is found in the secreted. Its function is as follows. Alpha toxins bind voltage-independently at site-3 of sodium channels (Nav) and inhibit the inactivation of the activated channels, thereby blocking neuronal transmission. The chain is Toxin Boma6b from Buthus occitanus mardochei (Moroccan scorpion).